Here is a 196-residue protein sequence, read N- to C-terminus: uncharacterized protein (196 aa).

The protein to E.coli YjaG.

This is an uncharacterized protein from Haemophilus influenzae (strain ATCC 51907 / DSM 11121 / KW20 / Rd).